Consider the following 71-residue polypeptide: Antitoxin ParD2 (71 aa).

Its function is as follows. Antitoxin component of a type II toxin-antitoxin (TA) system. The protein is Antitoxin ParD2 (parD2) of Mycobacterium tuberculosis (strain CDC 1551 / Oshkosh).